The following is a 504-amino-acid chain: MEEFQVYLELNRSRRHDFLYPLIFREYIYALAHEHGLNKSMIFFENQGYGNKFSSLIVKRLILRMDQQNRLISSANDSNQNPVFGHNNNLYSQMIAAGFAVIVEIPFSLRLISYSQGAEAAKSHNFQSIHSIFPFLEDKFSHLNYVLEALIPHPIHLEILVQALRYWVKDASSLHLLRFSLYEYCNLKSFITPKKSISIFNPRLFLFLYNSHTCEYESIFLFLRNQSSHLRSTSSGVFLERIFFYGKIKYLGEVFYNDFQNNLWLFKDPFIHFIRYQGKSILASKDTSLLINKWKYYFVDLWQYYFYLWSQSGRVRINQLSKYSLDFLGYLSSVRLNPSVVRSQMLENSFLIDNAVKTLDTRIPIISIIGSLSKAKFCNTLGHPISKPTWADSPDSDIIDRFVRISRNLSHYHSGSSKKKSLYRIKYILRFSCVKTLARKHKSTVRAFLKKLGSEFLEEFFTETEEEHVFSLIFPRGFFALRKVYRGRIWYLDIICINALVNHS.

Belongs to the intron maturase 2 family. MatK subfamily.

The protein localises to the plastid. It localises to the chloroplast. In terms of biological role, usually encoded in the trnK tRNA gene intron. Probably assists in splicing its own and other chloroplast group II introns. The protein is Maturase K of Gossypium gossypioides (Mexican cotton).